The sequence spans 105 residues: Serine protease inhibitor Kazal-type 6 (105 aa).

The first 23 residues, M1–S23, serve as a signal peptide directing secretion. Q24 is modified (pyrrolidone carboxylic acid). The Kazal-like domain occupies R49 to C105. 3 disulfides stabilise this stretch: C55-C87, C65-C84, and C73-C105.

The protein localises to the secreted. Functionally, serine protease inhibitor selective for kallikreins. Efficiently inhibits KLK4, KLK5, KLK6, KLK7, KLK12, KLK13 and KLK14. Doesn't inhibit KLK8. The chain is Serine protease inhibitor Kazal-type 6 (Spink6) from Rattus norvegicus (Rat).